Reading from the N-terminus, the 326-residue chain is Flotillin-like protein FloA (326 aa).

The chain crosses the membrane as a helical span at residues 3–23 (FTTIVVILLVIACIVVLFFIG).

Belongs to the flotillin-like FloA family. As to quaternary structure, homooligomerizes.

It is found in the cell membrane. The protein localises to the membrane raft. Its function is as follows. Found in functional membrane microdomains (FMM) that may be equivalent to eukaryotic membrane rafts. FMMs are highly dynamic and increase in number as cells age. Flotillins are thought to be important factors in membrane fluidity. The sequence is that of Flotillin-like protein FloA from Desulforapulum autotrophicum (strain ATCC 43914 / DSM 3382 / VKM B-1955 / HRM2) (Desulfobacterium autotrophicum).